We begin with the raw amino-acid sequence, 495 residues long: Serine/threonine protein phosphatase 2A 57 kDa regulatory subunit B' alpha isoform (495 aa).

Residues 1-13 (MFKKIMKGANRKA) show a composition bias toward basic residues. 2 disordered regions span residues 1-61 (MFKK…AATT) and 462-495 (QAKS…MITS). Residues 49-61 (VPSSPNSMAAATT) show a composition bias toward polar residues.

It belongs to the phosphatase 2A regulatory subunit B56 family. PP2A consists of a common heteromeric enzyme, composed of a catalytic subunit (subunits C), a constant regulatory subunit (subunit A), and a variety of regulatory subunits such as subunits B (the R2/B/PR55/B55, R3/B''/PR72/PR130/PR59 and R5/B'/B56 families). Interacts with BZR1. Interacts with BRI1. Interacts with SRK2E/OST1. In terms of tissue distribution, expressed ubiquitously, higher levels in leaves.

The protein resides in the nucleus. It is found in the cytoplasm. Its function is as follows. The B regulatory subunit may modulate substrate selectivity and catalytic activity, and may also direct the localization of the catalytic enzyme to a particular subcellular compartment. Required for the formation of the PP2A holoenzyme that positively regulates brassinosteroid signaling by dephosphorylating and activating BZR1. The polypeptide is Serine/threonine protein phosphatase 2A 57 kDa regulatory subunit B' alpha isoform (B'ALPHA) (Arabidopsis thaliana (Mouse-ear cress)).